The sequence spans 338 residues: Glyceraldehyde-3-phosphate dehydrogenase (338 aa).

NAD(+) is bound by residues 12 to 13 (RI), Asp-34, and Arg-79. D-glyceraldehyde 3-phosphate-binding positions include 150 to 152 (SCT), Thr-181, 210 to 211 (TG), and Arg-233. Cys-151 acts as the Nucleophile in catalysis. Asn-316 contacts NAD(+).

The protein belongs to the glyceraldehyde-3-phosphate dehydrogenase family. As to quaternary structure, homotetramer.

Its subcellular location is the cytoplasm. It catalyses the reaction D-glyceraldehyde 3-phosphate + phosphate + NAD(+) = (2R)-3-phospho-glyceroyl phosphate + NADH + H(+). The protein operates within carbohydrate degradation; glycolysis; pyruvate from D-glyceraldehyde 3-phosphate: step 1/5. In Yarrowia lipolytica (strain CLIB 122 / E 150) (Yeast), this protein is Glyceraldehyde-3-phosphate dehydrogenase (GPD).